Consider the following 493-residue polypeptide: Glycosyltransferase alg8 (493 aa).

Helical transmembrane passes span 13–32 (GWLF…PTSI), 47–69 (VGIW…LYIV), 380–402 (LTVA…LLWI), and 422–444 (PAYP…YVFF).

It belongs to the glycosyltransferase 2 family.

The protein resides in the cell membrane. It functions in the pathway glycan biosynthesis; alginate biosynthesis. Its function is as follows. Possibly a processive enzyme that polymerizes GDP-mannuronic acid. This chain is Glycosyltransferase alg8 (alg8), found in Pseudomonas syringae pv. tomato (strain ATCC BAA-871 / DC3000).